A 138-amino-acid polypeptide reads, in one-letter code: UPF0310 protein MAV_1800 (138 aa).

This sequence belongs to the UPF0310 family.

The chain is UPF0310 protein MAV_1800 from Mycobacterium avium (strain 104).